Here is a 1705-residue protein sequence, read N- to C-terminus: Protein TIC 214 (1705 aa).

5 helical membrane passes run 18 to 38 (IINS…FSIG), 67 to 87 (FITG…HLAL), 127 to 147 (LSIQ…HFIL), 175 to 195 (VGWI…LVWI), and 218 to 238 (SMSM…HYLG).

The protein belongs to the TIC214 family. As to quaternary structure, part of the Tic complex.

Its subcellular location is the plastid. It is found in the chloroplast inner membrane. Its function is as follows. Involved in protein precursor import into chloroplasts. May be part of an intermediate translocation complex acting as a protein-conducting channel at the inner envelope. This chain is Protein TIC 214, found in Helianthus annuus (Common sunflower).